The sequence spans 201 residues: Recombination protein RecR (201 aa).

A C4-type zinc finger spans residues 58 to 73; sequence CPECGLLTEEERCGLC. One can recognise a Toprim domain in the interval 81–176; the sequence is TLLCVVESSA…RTTRIAHGVP (96 aa).

The protein belongs to the RecR family.

In terms of biological role, may play a role in DNA repair. It seems to be involved in an RecBC-independent recombinational process of DNA repair. It may act with RecF and RecO. The protein is Recombination protein RecR of Halorhodospira halophila (strain DSM 244 / SL1) (Ectothiorhodospira halophila (strain DSM 244 / SL1)).